We begin with the raw amino-acid sequence, 335 residues long: Nuclear transcription factor Y subunit gamma (335 aa).

It belongs to the NFYC/HAP5 subunit family. In terms of assembly, heterotrimeric transcription factor composed of three components, NF-YA, NF-YB and NF-YC. NF-YB and NF-YC must interact and dimerize for NF-YA association and DNA binding.

It localises to the nucleus. Functionally, component of the sequence-specific heterotrimeric transcription factor (NF-Y) which specifically recognizes a 5'-CCAAT-3' box motif found in the promoters of its target genes. NF-Y can function as both an activator and a repressor, depending on its interacting cofactors. This chain is Nuclear transcription factor Y subunit gamma (Nfyc), found in Rattus norvegicus (Rat).